Here is a 456-residue protein sequence, read N- to C-terminus: Exodeoxyribonuclease 7 large subunit (456 aa).

Belongs to the XseA family. In terms of assembly, heterooligomer composed of large and small subunits.

The protein localises to the cytoplasm. It carries out the reaction Exonucleolytic cleavage in either 5'- to 3'- or 3'- to 5'-direction to yield nucleoside 5'-phosphates.. Functionally, bidirectionally degrades single-stranded DNA into large acid-insoluble oligonucleotides, which are then degraded further into small acid-soluble oligonucleotides. The chain is Exodeoxyribonuclease 7 large subunit from Lactobacillus delbrueckii subsp. bulgaricus (strain ATCC 11842 / DSM 20081 / BCRC 10696 / JCM 1002 / NBRC 13953 / NCIMB 11778 / NCTC 12712 / WDCM 00102 / Lb 14).